The sequence spans 245 residues: tRNA pseudouridine synthase A (245 aa).

Residue D52 is the Nucleophile of the active site. A substrate-binding site is contributed by Y111.

The protein belongs to the tRNA pseudouridine synthase TruA family. In terms of assembly, homodimer.

The catalysed reaction is uridine(38/39/40) in tRNA = pseudouridine(38/39/40) in tRNA. In terms of biological role, formation of pseudouridine at positions 38, 39 and 40 in the anticodon stem and loop of transfer RNAs. This chain is tRNA pseudouridine synthase A, found in Thermotoga neapolitana (strain ATCC 49049 / DSM 4359 / NBRC 107923 / NS-E).